Consider the following 130-residue polypeptide: MEWKIVVPLLAVAFTVANAGLVGGPMDANMNDQGTRDALQFAVVEHNKKTNDMFVRQVAKVVNAQKQVVSGMKYIFTVQMGRTPCRKGGVEKICSVHKDPQMAVPYKCTFEVWSRPWMSDIQMVKNQCES.

The first 19 residues, 1–19 (MEWKIVVPLLAVAFTVANA), serve as a signal peptide directing secretion. The short motif at 67–71 (QVVSG) is the Secondary area of contact element. Cystine bridges form between cysteine 85-cysteine 94 and cysteine 108-cysteine 128.

It belongs to the cystatin family. As to expression, ubiquitous expression including brain, white muscle, heart, gill, kidney, spleen, liver and skin with the highest and lowest level in brain and gill, respectively.

It localises to the secreted. In terms of biological role, cysteine proteinase inhibitor. The chain is Cystatin from Oncorhynchus keta (Chum salmon).